A 63-amino-acid polypeptide reads, in one-letter code: Adipokinetic prohormone type 1 (63 aa).

The first 22 residues, 1 to 22 (MVQRCLVVALLVVVVAAALCSA), serve as a signal peptide directing secretion. At Gln23 the chain carries Pyrrolidone carboxylic acid. Residue Thr32 is modified to Threonine amide.

This sequence belongs to the AKH/HRTH/RPCH family. As to quaternary structure, adipokinetic hormone precursor-related peptide (APRP) can form three type of disulfide-bond dimers: p1 (alpha-alpha), p2 (alpha-beta), and p3 (beta-beta).

The protein resides in the secreted. This hormone, released from cells in the corpora cardiaca, causes release of diglycerides from the fat body and stimulation of muscles to use these diglycerides as an energy source during energy-demanding processes. The polypeptide is Adipokinetic prohormone type 1 (Schistocerca gregaria (Desert locust)).